The primary structure comprises 443 residues: Probable serine transporter (443 aa).

The Cytoplasmic portion of the chain corresponds to 1 to 48 (MEIASNKGVIADASTPAGRAGMSESEWREAIKFDSTDTGWVIMSIGMA). The helical transmembrane segment at 49-69 (IGAGIVFLPVQVGLMGLWVFL) threads the bilayer. Residues 70–110 (LSSVIGYPAMYLFQRLFINTLAESPECKDYPSVISGYLGKN) lie on the Periplasmic side of the membrane. A helical transmembrane segment spans residues 111–131 (WGILLGALYFVMLVIWMFVYS). The Cytoplasmic portion of the chain corresponds to 132–149 (TAITNDSASYLHTFGVTE). Residues 150 to 170 (GLLSDSPFYGLVLICILVAIS) form a helical membrane-spanning segment. Residues 171-182 (SRGEKLLFKIST) lie on the Periplasmic side of the membrane. A helical membrane pass occupies residues 183–203 (GMVLTKLLVVAALGVSMVGMW). Residues 204–214 (HLYNVGSLPPL) are Cytoplasmic-facing. Residues 215–235 (GLLVKNAIITLPFTLTSILFI) traverse the membrane as a helical segment. The Periplasmic segment spans residues 236-264 (QTLSPMVISYRSREKSIEVARHKALRAMN). A helical transmembrane segment spans residues 265 to 285 (IAFGILFVTVFFYAVSFTLAM). The Cytoplasmic segment spans residues 286 to 297 (GHDEAVKAYEQN). The next 2 membrane-spanning stretches (helical) occupy residues 298 to 318 (ISAL…WVKV) and 319 to 339 (VSVI…YLGF). The Cytoplasmic segment spans residues 340-367 (REATQGIVMNILRRKMPAEKINENLVQR). Residues 368–388 (GIMIFAILLAWSAIVLNAPVL) traverse the membrane as a helical segment. Residue S389 is a topological domain, periplasmic. The helical transmembrane segment at 390 to 410 (FTSICSPIFGMVGCLIPAWLV) threads the bilayer. The Cytoplasmic segment spans residues 411 to 421 (YKVPALHKYKG). Residues 422-442 (MSLYLIIVTGLLLCVSPFLAF) traverse the membrane as a helical segment. Position 443 (S443) is a topological domain, periplasmic.

This sequence belongs to the amino acid/polyamine transporter 2 family. SdaC/TdcC subfamily.

The protein localises to the cell inner membrane. In terms of biological role, plays a role in L-cysteine detoxification. May transport both D- and L-serine. This chain is Probable serine transporter (dlsT), found in Escherichia coli (strain K12).